The chain runs to 196 residues: ATP-dependent Clp protease proteolytic subunit (196 aa).

Ser98 acts as the Nucleophile in catalysis. Residue His123 is part of the active site.

This sequence belongs to the peptidase S14 family. Fourteen ClpP subunits assemble into 2 heptameric rings which stack back to back to give a disk-like structure with a central cavity, resembling the structure of eukaryotic proteasomes.

The protein localises to the cytoplasm. The catalysed reaction is Hydrolysis of proteins to small peptides in the presence of ATP and magnesium. alpha-casein is the usual test substrate. In the absence of ATP, only oligopeptides shorter than five residues are hydrolyzed (such as succinyl-Leu-Tyr-|-NHMec, and Leu-Tyr-Leu-|-Tyr-Trp, in which cleavage of the -Tyr-|-Leu- and -Tyr-|-Trp bonds also occurs).. Functionally, cleaves peptides in various proteins in a process that requires ATP hydrolysis. Has a chymotrypsin-like activity. Plays a major role in the degradation of misfolded proteins. The polypeptide is ATP-dependent Clp protease proteolytic subunit (Lactiplantibacillus plantarum (strain ATCC BAA-793 / NCIMB 8826 / WCFS1) (Lactobacillus plantarum)).